We begin with the raw amino-acid sequence, 114 residues long: Large ribosomal subunit protein uL22 (114 aa).

It belongs to the universal ribosomal protein uL22 family. Part of the 50S ribosomal subunit.

Its function is as follows. This protein binds specifically to 23S rRNA; its binding is stimulated by other ribosomal proteins, e.g. L4, L17, and L20. It is important during the early stages of 50S assembly. It makes multiple contacts with different domains of the 23S rRNA in the assembled 50S subunit and ribosome. Functionally, the globular domain of the protein is located near the polypeptide exit tunnel on the outside of the subunit, while an extended beta-hairpin is found that lines the wall of the exit tunnel in the center of the 70S ribosome. This Streptococcus thermophilus (strain CNRZ 1066) protein is Large ribosomal subunit protein uL22.